The following is a 233-amino-acid chain: Ion-translocating oxidoreductase complex subunit E (233 aa).

Transmembrane regions (helical) follow at residues 18-38 (ALVQ…ATNA), 39-59 (LGLG…VSAL), 69-89 (IPIY…LINA), 92-112 (FGLY…CIVI), 128-148 (ALDG…LGAL), and 182-202 (PFLL…LLAG).

This sequence belongs to the NqrDE/RnfAE family. In terms of assembly, the complex is composed of six subunits: RnfA, RnfB, RnfC, RnfD, RnfE and RnfG.

It is found in the cell inner membrane. Functionally, part of a membrane-bound complex that couples electron transfer with translocation of ions across the membrane. This Yersinia pseudotuberculosis serotype O:1b (strain IP 31758) protein is Ion-translocating oxidoreductase complex subunit E.